A 32-amino-acid chain; its full sequence is Acetolactate synthase, catabolic (32 aa).

This sequence belongs to the TPP enzyme family. As to quaternary structure, homodimer.

The enzyme catalyses 2 pyruvate + H(+) = (2S)-2-acetolactate + CO2. Its pathway is polyol metabolism; (R,R)-butane-2,3-diol biosynthesis; (R,R)-butane-2,3-diol from pyruvate: step 1/3. This chain is Acetolactate synthase, catabolic (budB), found in Klebsiella aerogenes (Enterobacter aerogenes).